We begin with the raw amino-acid sequence, 283 residues long: Formamidopyrimidine-DNA glycosylase (283 aa).

Proline 2 acts as the Schiff-base intermediate with DNA in catalysis. The Proton donor role is filled by glutamate 3. The active-site Proton donor; for beta-elimination activity is the lysine 58. Positions 100, 119, and 162 each coordinate DNA. An FPG-type zinc finger spans residues 247–283 (DVYGREGEPCRRAGCTGTVTRITQSGRSSFYCGKCQR). Arginine 273 functions as the Proton donor; for delta-elimination activity in the catalytic mechanism.

Belongs to the FPG family. As to quaternary structure, monomer. It depends on Zn(2+) as a cofactor.

The enzyme catalyses Hydrolysis of DNA containing ring-opened 7-methylguanine residues, releasing 2,6-diamino-4-hydroxy-5-(N-methyl)formamidopyrimidine.. The catalysed reaction is 2'-deoxyribonucleotide-(2'-deoxyribose 5'-phosphate)-2'-deoxyribonucleotide-DNA = a 3'-end 2'-deoxyribonucleotide-(2,3-dehydro-2,3-deoxyribose 5'-phosphate)-DNA + a 5'-end 5'-phospho-2'-deoxyribonucleoside-DNA + H(+). Functionally, involved in base excision repair of DNA damaged by oxidation or by mutagenic agents. Acts as a DNA glycosylase that recognizes and removes damaged bases. Has a preference for oxidized purines, such as 7,8-dihydro-8-oxoguanine (8-oxoG). Has AP (apurinic/apyrimidinic) lyase activity and introduces nicks in the DNA strand. Cleaves the DNA backbone by beta-delta elimination to generate a single-strand break at the site of the removed base with both 3'- and 5'-phosphates. This chain is Formamidopyrimidine-DNA glycosylase, found in Ruegeria sp. (strain TM1040) (Silicibacter sp.).